We begin with the raw amino-acid sequence, 159 residues long: Cytochrome c-type biogenesis protein CcmE (159 aa).

The Cytoplasmic portion of the chain corresponds to 1–7 (MTRKGRR). The helical; Signal-anchor for type II membrane protein transmembrane segment at 8–28 (LVLIGAGLGVLALAAGLILSA) threads the bilayer. At 29 to 159 (LNDTIVFFRS…AAPVQRAPGS (131 aa)) the chain is on the periplasmic side. His121 and Tyr125 together coordinate heme. A disordered region spans residues 134–159 (LKKQGRWQEGGPAPGTAAPVQRAPGS).

This sequence belongs to the CcmE/CycJ family.

It is found in the cell inner membrane. In terms of biological role, heme chaperone required for the biogenesis of c-type cytochromes. Transiently binds heme delivered by CcmC and transfers the heme to apo-cytochromes in a process facilitated by CcmF and CcmH. The protein is Cytochrome c-type biogenesis protein CcmE of Xanthobacter autotrophicus (strain ATCC BAA-1158 / Py2).